A 130-amino-acid polypeptide reads, in one-letter code: Small ribosomal subunit protein uS11 (130 aa).

It belongs to the universal ribosomal protein uS11 family. As to quaternary structure, part of the 30S ribosomal subunit. Interacts with proteins S7 and S18. Binds to IF-3.

In terms of biological role, located on the platform of the 30S subunit, it bridges several disparate RNA helices of the 16S rRNA. Forms part of the Shine-Dalgarno cleft in the 70S ribosome. The protein is Small ribosomal subunit protein uS11 of Thiobacillus denitrificans (strain ATCC 25259 / T1).